A 367-amino-acid chain; its full sequence is Glutamate 5-kinase (367 aa).

ATP is bound at residue Lys-17. Positions 57, 144, and 156 each coordinate substrate. ATP contacts are provided by residues 176–177 and 217–223; these read SD and TGGMTSK. Positions 279 to 357 constitute a PUA domain; that stretch reads AGALTLDEGA…SELPGELRRP (79 aa).

Belongs to the glutamate 5-kinase family.

It localises to the cytoplasm. The enzyme catalyses L-glutamate + ATP = L-glutamyl 5-phosphate + ADP. Its pathway is amino-acid biosynthesis; L-proline biosynthesis; L-glutamate 5-semialdehyde from L-glutamate: step 1/2. Catalyzes the transfer of a phosphate group to glutamate to form L-glutamate 5-phosphate. This chain is Glutamate 5-kinase, found in Mycobacterium avium (strain 104).